The primary structure comprises 249 residues: Adapter protein MecA (249 aa).

It belongs to the MecA family. Homodimer.

Functionally, enables the recognition and targeting of unfolded and aggregated proteins to the ClpC protease or to other proteins involved in proteolysis. This is Adapter protein MecA from Streptococcus thermophilus (strain ATCC BAA-491 / LMD-9).